The chain runs to 458 residues: Tyrosine phenol-lyase (458 aa).

At lysine 258 the chain carries N6-(pyridoxal phosphate)lysine.

It belongs to the beta-eliminating lyase family. Homotetramer. The cofactor is pyridoxal 5'-phosphate.

The enzyme catalyses L-tyrosine + H2O = phenol + pyruvate + NH4(+). In Symbiobacterium sp. (strain SC-1), this protein is Tyrosine phenol-lyase (tpl).